The sequence spans 424 residues: Probable methyltransferase EP424R (424 aa).

One can recognise an Adrift-type SAM-dependent 2'-O-MTase domain in the interval glutamine 103–arginine 315. Residues glycine 135 and aspartate 228 each contribute to the S-adenosyl-L-methionine site. The active-site Proton acceptor is lysine 268.

The protein resides in the virion. The sequence is that of Probable methyltransferase EP424R from Ornithodoros (relapsing fever ticks).